Reading from the N-terminus, the 613-residue chain is MPDYRSKTSTHGRNMAGARALWRATGMKDDDFKKPIIAIANSFTQFVPGHVHLKDLGQLVAREIERAGGVAKEFNTIAVDDGIAMGHDGMLYSLPSREIIADSVEYMVNAHCADAIVCISNCDKITPGMLMAALRLNIPVIFVSGGPMEAGKTKLASHGLDLVDAMVIAADSSASDEKVAEYERSACPTCGSCSGMFTANSMNCLTEALGLALPGNGSTLATHSDREQLFLQAGRTIVELCKRYYGENDESVLPRNIANFKAFENAMMLDIAMGGSTNTILHLLAAAQEAEIDFDLRDIDRLSRKVPQLCKVAPNIQKYHMEDVHRAGGIFSILGSLARGGLLHTDLPTVHSRSMEEAIAKWDITQTDDEAVHHFFKAGPAGIPTQTAFSQSTRWETLDDDRENGCIRSFEHAYSKEGGLAVLYGNIALDGCVVKTAGVDESIHVFEGNAKIFESQDSAVRGILADEVKEGDIVIIRYEGPKGGPGMQEMLYPTSYLKSKGLGKACALLTDGRFSGGTSGLSIGHASPEAAAGGAIGLVQDGDKVLIDIPNRSINLLISDEELAARRVEQDKKGWKPVEQRPRKVTTALKAYALLATSADKGAVRNKAMLDGL.

Asp81 contributes to the Mg(2+) binding site. Cys122 provides a ligand contact to [2Fe-2S] cluster. Mg(2+) is bound by residues Asp123 and Lys124. Lys124 bears the N6-carboxylysine mark. [2Fe-2S] cluster is bound at residue Cys193. Residue Glu489 coordinates Mg(2+). The active-site Proton acceptor is the Ser515.

It belongs to the IlvD/Edd family. As to quaternary structure, homodimer. The cofactor is [2Fe-2S] cluster. It depends on Mg(2+) as a cofactor.

It catalyses the reaction (2R)-2,3-dihydroxy-3-methylbutanoate = 3-methyl-2-oxobutanoate + H2O. The enzyme catalyses (2R,3R)-2,3-dihydroxy-3-methylpentanoate = (S)-3-methyl-2-oxopentanoate + H2O. Its pathway is amino-acid biosynthesis; L-isoleucine biosynthesis; L-isoleucine from 2-oxobutanoate: step 3/4. The protein operates within amino-acid biosynthesis; L-valine biosynthesis; L-valine from pyruvate: step 3/4. In terms of biological role, functions in the biosynthesis of branched-chain amino acids. Catalyzes the dehydration of (2R,3R)-2,3-dihydroxy-3-methylpentanoate (2,3-dihydroxy-3-methylvalerate) into 2-oxo-3-methylpentanoate (2-oxo-3-methylvalerate) and of (2R)-2,3-dihydroxy-3-methylbutanoate (2,3-dihydroxyisovalerate) into 2-oxo-3-methylbutanoate (2-oxoisovalerate), the penultimate precursor to L-isoleucine and L-valine, respectively. The protein is Dihydroxy-acid dehydratase of Pseudomonas fluorescens (strain Pf0-1).